A 138-amino-acid polypeptide reads, in one-letter code: Large ribosomal subunit protein uL16 (138 aa).

Residues 1 to 13 (MLQPSRRKYRKEQ) are compositionally biased toward basic residues. The disordered stretch occupies residues 1 to 24 (MLQPSRRKYRKEQKGRNTGLASRG).

Belongs to the universal ribosomal protein uL16 family. As to quaternary structure, part of the 50S ribosomal subunit.

Its function is as follows. Binds 23S rRNA and is also seen to make contacts with the A and possibly P site tRNAs. The chain is Large ribosomal subunit protein uL16 from Bordetella bronchiseptica (strain ATCC BAA-588 / NCTC 13252 / RB50) (Alcaligenes bronchisepticus).